Reading from the N-terminus, the 484-residue chain is Cobyric acid synthase (484 aa).

Residues 251–438 form the GATase cobBQ-type domain; it reads ALKVAVPVLS…LHGLFGSDAY (188 aa). The active-site Nucleophile is Cys333. The active site involves His430.

Belongs to the CobB/CobQ family. CobQ subfamily.

Its pathway is cofactor biosynthesis; adenosylcobalamin biosynthesis. In terms of biological role, catalyzes amidations at positions B, D, E, and G on adenosylcobyrinic A,C-diamide. NH(2) groups are provided by glutamine, and one molecule of ATP is hydrogenolyzed for each amidation. In Sinorhizobium fredii (strain NBRC 101917 / NGR234), this protein is Cobyric acid synthase.